A 1520-amino-acid chain; its full sequence is Myosin-5 (1520 aa).

The Myosin N-terminal SH3-like domain maps to 7–56 (IVGSHVWVEDPHLAWIDGEVTRIDGINVHVKTKKGKTVVTNVYFPKDTEA). Positions 59-729 (GGVDDMTKLS…QMAELDARRA (671 aa)) constitute a Myosin motor domain. Residues 153–160 (GESGAGKT) and 206–214 (NNNSSRFGK) contribute to the ATP site. Actin-binding stretches follow at residues 492 to 526 (LIEK…FQTF), 528 to 551 (EHER…AGEV), 586 to 610 (FHAL…KQQL), and 610 to 632 (LHSL…KPNN). IQ domains are found at residues 732 to 761 (LGNA…AAIV), 755 to 784 (IRNA…EAAA), 780 to 809 (IEAA…STIV), 803 to 832 (TRSS…RKAA), 828 to 857 (QRKA…AAIV), and 851 to 880 (LQKA…AARD). Residues 881–1047 (TGALKDAKNK…ESENKVLRQQ (167 aa)) are a coiled coil. A disordered region spans residues 1062 to 1100 (PKTTIIQRTPEKDTFSNGETTQLQEPETEDRPQKSLNQK). The span at 1076 to 1086 (FSNGETTQLQE) shows a compositional bias: polar residues. The 316-residue stretch at 1148 to 1463 (NRIIETIASA…IATMRAEVSD (316 aa)) folds into the Dilute domain.

It belongs to the TRAFAC class myosin-kinesin ATPase superfamily. Myosin family. Plant myosin class XI subfamily. In terms of assembly, homodimer. Interacts with MYOB1 and MYOB2. Interacts with PHOX1.

It localises to the cytoplasm. Its function is as follows. Myosin heavy chain that is required for the cell cycle-regulated transport of various organelles and proteins for their segregation. Functions by binding with its tail domain to receptor proteins on organelles and exerting force with its N-terminal motor domain against actin filaments, thereby transporting its cargo along polarized actin cables. Contributes to the trafficking of Golgi stacks, mitochondria and peroxisomes. Required for development of pavement cells, trichomes, and stigmatic papillae. The chain is Myosin-5 (XI-1) from Arabidopsis thaliana (Mouse-ear cress).